The sequence spans 441 residues: MAVLAKFISKNHPSVPIIIISNAPESAAASVAAIPSISYHRLPLPEIPPDMTTDRVELFFELPRLSNPNLLTALQQISQKTRIRAVILDFFCNAAFEVPTSLNIPTYYYFSAGTPTAILTLYFETIDETIPVDLQDLNDYVDIPGLPPIHCLDIPVALSPRKSLVYKSSVDISKNLRRSAGILVNGFDALEFRAIGSHSQRPMHFKGPTPPVYFIGPLVGDVDTKAGSEEHECLRWLDTQPSKSVVFLCFGRRGVFSAKQLKETAAALENSGHRFLWSVRNPPELKKATGSDEPDLDELLPEGFLERTKDRGFVIKSWAPQKEVLAHDSVGGFVTHCGRSSVSEGVWFGVPMIGWPVDAELRLNRAVMVDDLQVALPLEEEAGGFVTAAELEKRVRELMETKAGKAVRQRVTELKLSARAAVAENGSSLNDLKKFLHATRD.

It belongs to the UDP-glycosyltransferase family. As to quaternary structure, homodimer.

The enzyme catalyses baicalein + UDP-alpha-D-glucuronate = baicalin + UDP. Inhibited by copper, zinc and iron, p-Chloromercuri-benzoic acid (PCMBA) and 4,4'-diisothiocyanostilbene-2,2'-disulfonic acid (DIDS), but not by N-ethylmaleimide (NEM), dithioerythritol (DTE), calcium or magnesium. Involved in the production of glucuronosylated baicalein, a flavonoid that shows antiallergic, anti-HIV and antitumor activities. Can use baicalein, scutellarein and wogonin as substrates, but not chrysin, apigenin, luteolin, quercetin, formononetin and daidzein. Highly specific for UDP-glucuronate (UDP-GlcUA) and no activity with UDP-glucose or UDP-galacturonic acid. The chain is Baicalein 7-O-glucuronosyltransferase (UBGAT-I) from Scutellaria baicalensis (Baical skullcap).